Reading from the N-terminus, the 247-residue chain is Segregation and condensation protein A (247 aa).

It belongs to the ScpA family. As to quaternary structure, component of a cohesin-like complex composed of ScpA, ScpB and the Smc homodimer, in which ScpA and ScpB bind to the head domain of Smc. The presence of the three proteins is required for the association of the complex with DNA.

The protein localises to the cytoplasm. Functionally, participates in chromosomal partition during cell division. May act via the formation of a condensin-like complex containing Smc and ScpB that pull DNA away from mid-cell into both cell halves. The protein is Segregation and condensation protein A of Caldanaerobacter subterraneus subsp. tengcongensis (strain DSM 15242 / JCM 11007 / NBRC 100824 / MB4) (Thermoanaerobacter tengcongensis).